The following is a 111-amino-acid chain: Cytochrome c2 (111 aa).

Residues C14, C17, H18, and M83 each contribute to the heme c site.

It belongs to the cytochrome c family. Post-translationally, binds 1 heme c group covalently per subunit.

Functionally, cytochrome c2 is found mainly in purple, non-sulfur, photosynthetic bacteria where it functions as the electron donor to the oxidized bacteriochlorophyll in the photophosphorylation pathway. However, it may also have a role in the respiratory chain and is found in some non-photosynthetic bacteria. This is Cytochrome c2 from Agrobacterium tumefaciens (strain II Chrys).